Consider the following 447-residue polypeptide: Alpha-1,3-mannosyl-glycoprotein 2-beta-N-acetylglucosaminyltransferase (447 aa).

Residues M1–S6 lie on the Cytoplasmic side of the membrane. Residues A7–W29 traverse the membrane as a helical; Signal-anchor for type II membrane protein segment. Topologically, residues T30–N447 are lumenal. An intrachain disulfide couples C115 to C145. Substrate contacts are provided by R117, D144, H190, and D212. Residue D213 coordinates Mn(2+). Residues C239 and C305 are joined by a disulfide bond. D291 (proton acceptor) is an active-site residue. Residue S322 participates in substrate binding.

Belongs to the glycosyltransferase 13 family. In terms of assembly, interacts with MGAT4D. Interacts with BRI3. Requires Mn(2+) as cofactor. In terms of tissue distribution, appears to be present in all tissues.

It is found in the golgi apparatus membrane. The protein resides in the cytoplasm. Its subcellular location is the perinuclear region. It carries out the reaction N(4)-(alpha-D-Man-(1-&gt;3)-[alpha-D-Man-(1-&gt;3)-[alpha-D-Man-(1-&gt;6)]-alpha-D-Man-(1-&gt;6)]-beta-D-Man-(1-&gt;4)-beta-D-GlcNAc-(1-&gt;4)-beta-D-GlcNAc)-L-asparaginyl-[protein] (N-glucan mannose isomer 5A1,2) + UDP-N-acetyl-alpha-D-glucosamine = N(4)-{beta-D-GlcNAc-(1-&gt;2)-alpha-D-Man-(1-&gt;3)-[alpha-D-Man-(1-&gt;3)-[alpha-D-Man-(1-&gt;6)]-alpha-D-Man-(1-&gt;6)]-beta-D-Man-(1-&gt;4)-beta-D-GlcNAc-(1-&gt;4)-beta-D-GlcNAc}-L-asparaginyl-[protein] + UDP + H(+). The protein operates within protein modification; protein glycosylation. Initiates complex N-linked carbohydrate formation. Essential for the conversion of high-mannose to hybrid and complex N-glycans. The chain is Alpha-1,3-mannosyl-glycoprotein 2-beta-N-acetylglucosaminyltransferase (Mgat1) from Rattus norvegicus (Rat).